The chain runs to 294 residues: MKTKLIVVLGPTAVGKTALGIKLAQQFHGEIISGDSQQVYRKLDIGTAKATAAEQAAVPHHLIDVREVDENYSAFDFVQEATKEIANICARGYLPIIVGGTGLYLQSLLEGYHLGGQVDHEAVLAYRRELETLSDTELSQLVETKQIVMTEPNRRRLMRSLELHKFSQGVQNQGSPYDVLLIGLNDNRQDLYERINARVDKMMAAGLLDEAKWLYDNYPHAQATRGIGYKELFPYFAGDIGLEEAVEKIKQNTRRFAKRQLTWFKNRMAVSFYSVSDSDYKGKINQAVVDFLRN.

Residue 10–17 (GPTAVGKT) coordinates ATP. Residue 12–17 (TAVGKT) coordinates substrate. The segment at 35 to 38 (DSQQ) is interaction with substrate tRNA.

The protein belongs to the IPP transferase family. As to quaternary structure, monomer. Mg(2+) is required as a cofactor.

The catalysed reaction is adenosine(37) in tRNA + dimethylallyl diphosphate = N(6)-dimethylallyladenosine(37) in tRNA + diphosphate. Functionally, catalyzes the transfer of a dimethylallyl group onto the adenine at position 37 in tRNAs that read codons beginning with uridine, leading to the formation of N6-(dimethylallyl)adenosine (i(6)A). The polypeptide is tRNA dimethylallyltransferase (Streptococcus mutans serotype c (strain ATCC 700610 / UA159)).